We begin with the raw amino-acid sequence, 535 residues long: Heparanase (535 aa).

The signal sequence occupies residues 1 to 27 (MLRLLLLWLWGPLGALAQGAPAGTAPT). Residues 54-56 (DAS) and Thr89 each bind heparan sulfate group. Residues 102 to 149 (PTSEERSYWKSQVNHDICRSEPVSAAVLRKLQVEWPFQELLLLREQYQ) constitute a propeptide, linker peptide. The cysteines at positions 119 and 171 are disulfide-linked. 150–154 (KEFKN) contacts heparan sulfate group. N-linked (GlcNAc...) asparagine glycans are attached at residues Asn192 and Asn209. Glu217 functions as the Proton donor in the catalytic mechanism. Heparan sulfate group is bound by residues 262 to 272 (QPRGKTVKLLR), His288, and Arg295. Positions 280 to 409 (EVIDSLTWHH…LLFKKLVGPR (130 aa)) are required for heterodimerization with the heparanase 8 kDa subunit. Residue Glu335 is the Nucleophile of the active site. Heparan sulfate group contacts are provided by residues 340–342 (YGG) and 381–383 (GNY). Cys429 and Cys534 are disulfide-bonded. N-linked (GlcNAc...) asparagine glycosylation occurs at Asn451. The required for transferring proheparanase to the Golgi apparatus, secretion and subsequent enzyme activity and for enhancement of PKB/AKT1 phosphorylation stretch occupies residues 519–535 (FSYGFFVIRNAKIAACI).

It belongs to the glycosyl hydrolase 79 family. As to quaternary structure, heterodimer; heterodimer formation between the 8 kDa and the 50 kDa subunits is required for enzyme activity. Interacts with TF; the interaction, inhibited by heparin, enhances the generation of activated factor X and activates coagulation. Interacts with HRG; the interaction is enhanced at acidic pH, partially inhibits binding of HPSE to cell surface receptors and modulates its enzymatic activity. Interacts with SDC1; the interaction enhances the shedding of SDC1. Interacts with HPSE2. In terms of processing, proteolytically processed. The cleavage of the 65 kDa form leads to the generation of a linker peptide, and the 8 kDa and 50 kDa products. The active form, the 8/50 kDa heterodimer, is resistant to degradation. Complete removal of the linker peptide appears to be a prerequisite to the complete activation of the enzyme. Post-translationally, N-glycosylated. Glycosylation of the 50 kDa subunit appears to be essential for its solubility. Expressed in skin, mainly in the stratum granulosum and the first layer of the stratum corneum in the upper part of the epidermis. Also detected in hair follicles and in sebaceous glands.

It is found in the lysosome membrane. The protein localises to the secreted. Its subcellular location is the nucleus. The catalysed reaction is endohydrolysis of (1-&gt;4)-beta-D-glycosidic bonds of heparan sulfate chains in heparan sulfate proteoglycan.. Its activity is regulated as follows. Inhibited by EDTA and activated by calcium and magnesium. Inhibited by laminarin sulfate and, to a lower extent, by heparin and sulfamin. In terms of biological role, endoglycosidase that cleaves heparan sulfate proteoglycans (HSPGs) into heparan sulfate side chains and core proteoglycans. Participates in extracellular matrix (ECM) degradation and remodeling. Selectively cleaves the linkage between a glucuronic acid unit and an N-sulfo glucosamine unit carrying either a 3-O-sulfo or a 6-O-sulfo group. Can also cleave the linkage between a glucuronic acid unit and an N-sulfo glucosamine unit carrying a 2-O-sulfo group, but not linkages between a glucuronic acid unit and a 2-O-sulfated iduronic acid moiety. It is essentially inactive at neutral pH but becomes active under acidic conditions such as during tumor invasion and in inflammatory processes. Facilitates cell migration associated with metastasis, wound healing and inflammation. Enhances shedding of syndecans, and increases endothelial invasion and angiogenesis in myelomas. Acts as a procoagulant by increasing the generation of activation factor X in the presence of tissue factor and activation factor VII. Increases cell adhesion to the extracellular matrix (ECM), independent of its enzymatic activity. Induces AKT1/PKB phosphorylation via lipid rafts increasing cell mobility and invasion. Heparin increases this AKT1/PKB activation. Regulates osteogenesis. Enhances angiogenesis through up-regulation of SRC-mediated activation of VEGF. Implicated in hair follicle inner root sheath differentiation and hair homeostasis. This is Heparanase (Hpse) from Mus musculus (Mouse).